Reading from the N-terminus, the 55-residue chain is Large ribosomal subunit protein eL37 (55 aa).

Zn(2+) contacts are provided by C20, C23, C35, and C38. Residues 20–38 form a C4-type zinc finger; sequence CRRCGKNSYHKRHHRCSSC.

It belongs to the eukaryotic ribosomal protein eL37 family. Zn(2+) is required as a cofactor.

In terms of biological role, binds to the 23S rRNA. This chain is Large ribosomal subunit protein eL37, found in Cenarchaeum symbiosum (strain A).